Reading from the N-terminus, the 159-residue chain is 6,7-dimethyl-8-ribityllumazine synthase (159 aa).

Residues W28, 59-61 (ALE), and 81-83 (CVI) each bind 5-amino-6-(D-ribitylamino)uracil. 86 to 87 (GT) contributes to the (2S)-2-hydroxy-3-oxobutyl phosphate binding site. H89 serves as the catalytic Proton donor. N114 contacts 5-amino-6-(D-ribitylamino)uracil. R128 is a (2S)-2-hydroxy-3-oxobutyl phosphate binding site.

The protein belongs to the DMRL synthase family.

The catalysed reaction is (2S)-2-hydroxy-3-oxobutyl phosphate + 5-amino-6-(D-ribitylamino)uracil = 6,7-dimethyl-8-(1-D-ribityl)lumazine + phosphate + 2 H2O + H(+). Its pathway is cofactor biosynthesis; riboflavin biosynthesis; riboflavin from 2-hydroxy-3-oxobutyl phosphate and 5-amino-6-(D-ribitylamino)uracil: step 1/2. Catalyzes the formation of 6,7-dimethyl-8-ribityllumazine by condensation of 5-amino-6-(D-ribitylamino)uracil with 3,4-dihydroxy-2-butanone 4-phosphate. This is the penultimate step in the biosynthesis of riboflavin. This chain is 6,7-dimethyl-8-ribityllumazine synthase, found in Corynebacterium kroppenstedtii (strain DSM 44385 / JCM 11950 / CIP 105744 / CCUG 35717).